The sequence spans 217 residues: Chorionic somatomammotropin hormone 1 (217 aa).

A signal peptide spans 1 to 26; sequence MAPGSRTSLLLAFALLCLPWLQEAGA. Residue His44 participates in Zn(2+) binding. Cys79 and Cys191 are oxidised to a cystine. Glu200 provides a ligand contact to Zn(2+). An intrachain disulfide couples Cys208 to Cys215.

The protein belongs to the somatotropin/prolactin family. As to quaternary structure, can be found in a monomeric as well as dimeric form.

Its subcellular location is the secreted. In terms of biological role, produced only during pregnancy and is involved in stimulating lactation, fetal growth and metabolism. Does not interact with GHR but only activates PRLR through zinc-induced dimerization. This chain is Chorionic somatomammotropin hormone 1 (CSH1), found in Homo sapiens (Human).